A 207-amino-acid polypeptide reads, in one-letter code: MENEDGYMTLSFKNRCKSKQKSKDFSLYPQYYCLLLIFGCIVILIFIMTGIDLKFWHKKMDFSQNVNVSSLSGHNYLCPNDWLLNEGKCYWFSTSFKTWKESQRDCTQLQAHLLVIQNLDELEFIQNSLKPGHFGWIGLYVTFQGNLWMWIDEHFLVPELFSVIGPTDDRSCAVITGNWVYSEDCSSTFKGICQRDAILTHNGTSGV.

At 1 to 30 the chain is on the cytoplasmic side; it reads MENEDGYMTLSFKNRCKSKQKSKDFSLYPQ. Phosphotyrosine is present on Tyr-7. The helical; Signal-anchor for type II membrane protein transmembrane segment at 31 to 51 threads the bilayer; the sequence is YYCLLLIFGCIVILIFIMTGI. Over 52 to 207 the chain is Extracellular; the sequence is DLKFWHKKMD…ILTHNGTSGV (156 aa). The N-linked (GlcNAc...) asparagine glycan is linked to Asn-67. Cystine bridges form between Cys-78–Cys-89, Cys-106–Cys-193, and Cys-172–Cys-185. One can recognise a C-type lectin domain in the interval 85–194; it reads NEGKCYWFST…CSSTFKGICQ (110 aa). Asn-202 carries N-linked (GlcNAc...) asparagine glycosylation.

Homodimer; non-disulfide-linked. Interacts with CLEC2A. N-glycosylated.

Its subcellular location is the cell membrane. In terms of biological role, C-type lectin-like receptor involved in natural killer cell mediated cytotoxicity and cytokine secretion in keratinocytes via its interaction with CLEC2A. Triggers degranulation in a SYK-dependent manner and stimulates SYK phosphotyrosinylation without recruiting SYK directly. In Homo sapiens (Human), this protein is Killer cell lectin-like receptor subfamily F member 2 (KLRF2).